A 193-amino-acid chain; its full sequence is Ion-translocating oxidoreductase complex subunit B (193 aa).

The tract at residues 1–26 is hydrophobic; sequence MSTMLIAVILLTLLALFFGVLLGFAA. The 59-residue stretch at 32-90 folds into the 4Fe-4S domain; that stretch reads EGNPIVDELEAILPQTQCGQCGYPGCRPYAEAIANGDKVNKCPPGGTATMEKLASLMGV. The [4Fe-4S] cluster site is built by C49, C52, C57, C73, C114, C117, C120, C124, C144, C147, C150, and C154. 4Fe-4S ferredoxin-type domains are found at residues 105–134 and 136–164; these read KVAY…GAGK and MHTV…MLPV.

The protein belongs to the 4Fe4S bacterial-type ferredoxin family. RnfB subfamily. The complex is composed of six subunits: RnfA, RnfB, RnfC, RnfD, RnfE and RnfG. [4Fe-4S] cluster serves as cofactor.

It is found in the cell inner membrane. Part of a membrane-bound complex that couples electron transfer with translocation of ions across the membrane. The sequence is that of Ion-translocating oxidoreductase complex subunit B from Shewanella sp. (strain MR-4).